The primary structure comprises 218 residues: Capsid protein (218 aa).

M1 carries the post-translational modification N-acetylmethionine; by host. Positions 1–28 (MDKSESTSAGRNRRRRPRRGSRSAPSSA) are disordered. Over residues 11–21 (RNRRRRPRRGS) the composition is skewed to basic residues.

This sequence belongs to the cucumovirus capsid protein family.

It is found in the virion. In terms of biological role, capsid protein. Probably binds RNA and plays a role in packaging. This is Capsid protein from Cucumis sativus (Cucumber).